The following is a 354-amino-acid chain: Uroporphyrinogen decarboxylase (354 aa).

Residues 27–31, Asp77, Tyr154, Ser209, and His327 contribute to the substrate site; that span reads RQAGR.

This sequence belongs to the uroporphyrinogen decarboxylase family. In terms of assembly, homodimer.

The protein resides in the cytoplasm. The enzyme catalyses uroporphyrinogen III + 4 H(+) = coproporphyrinogen III + 4 CO2. Its pathway is porphyrin-containing compound metabolism; protoporphyrin-IX biosynthesis; coproporphyrinogen-III from 5-aminolevulinate: step 4/4. In terms of biological role, catalyzes the decarboxylation of four acetate groups of uroporphyrinogen-III to yield coproporphyrinogen-III. This Shewanella pealeana (strain ATCC 700345 / ANG-SQ1) protein is Uroporphyrinogen decarboxylase.